We begin with the raw amino-acid sequence, 484 residues long: UDP-N-acetylmuramate--L-alanine ligase (484 aa).

123-129 (GTHGKTT) is a binding site for ATP.

This sequence belongs to the MurCDEF family.

The protein localises to the cytoplasm. It carries out the reaction UDP-N-acetyl-alpha-D-muramate + L-alanine + ATP = UDP-N-acetyl-alpha-D-muramoyl-L-alanine + ADP + phosphate + H(+). It functions in the pathway cell wall biogenesis; peptidoglycan biosynthesis. Its function is as follows. Cell wall formation. The polypeptide is UDP-N-acetylmuramate--L-alanine ligase (Pseudomonas fluorescens (strain ATCC BAA-477 / NRRL B-23932 / Pf-5)).